We begin with the raw amino-acid sequence, 210 residues long: Probable nicotinate-nucleotide adenylyltransferase (210 aa).

Belongs to the NadD family.

It carries out the reaction nicotinate beta-D-ribonucleotide + ATP + H(+) = deamido-NAD(+) + diphosphate. It functions in the pathway cofactor biosynthesis; NAD(+) biosynthesis; deamido-NAD(+) from nicotinate D-ribonucleotide: step 1/1. In terms of biological role, catalyzes the reversible adenylation of nicotinate mononucleotide (NaMN) to nicotinic acid adenine dinucleotide (NaAD). The polypeptide is Probable nicotinate-nucleotide adenylyltransferase (Vesicomyosocius okutanii subsp. Calyptogena okutanii (strain HA)).